The chain runs to 445 residues: N-succinylarginine dihydrolase (445 aa).

Substrate is bound by residues 19–28, asparagine 110, and 137–138; these read AGLSFGNVAS and HR. Residue glutamate 174 is part of the active site. Arginine 214 contributes to the substrate binding site. Histidine 250 is an active-site residue. Positions 252 and 363 each coordinate substrate. Cysteine 369 (nucleophile) is an active-site residue.

This sequence belongs to the succinylarginine dihydrolase family. As to quaternary structure, homodimer.

The enzyme catalyses N(2)-succinyl-L-arginine + 2 H2O + 2 H(+) = N(2)-succinyl-L-ornithine + 2 NH4(+) + CO2. Its pathway is amino-acid degradation; L-arginine degradation via AST pathway; L-glutamate and succinate from L-arginine: step 2/5. Its function is as follows. Catalyzes the hydrolysis of N(2)-succinylarginine into N(2)-succinylornithine, ammonia and CO(2). The polypeptide is N-succinylarginine dihydrolase (Shewanella halifaxensis (strain HAW-EB4)).